A 338-amino-acid chain; its full sequence is GTPase Obg (338 aa).

One can recognise an Obg domain in the interval 1-159 (MKFIDEVTLF…AKLRLELKLM (159 aa)). The OBG-type G domain maps to 160-331 (ADVGLLGLPN…LLDEIARRLW (172 aa)). Residues 166 to 173 (GLPNAGKS), 191 to 195 (FTTIK), 213 to 216 (DIPG), 283 to 286 (TKLD), and 312 to 314 (SSA) each bind GTP. Residues serine 173 and threonine 193 each coordinate Mg(2+).

The protein belongs to the TRAFAC class OBG-HflX-like GTPase superfamily. OBG GTPase family. Monomer. Mg(2+) serves as cofactor.

Its subcellular location is the cytoplasm. An essential GTPase which binds GTP, GDP and possibly (p)ppGpp with moderate affinity, with high nucleotide exchange rates and a fairly low GTP hydrolysis rate. Plays a role in control of the cell cycle, stress response, ribosome biogenesis and in those bacteria that undergo differentiation, in morphogenesis control. This chain is GTPase Obg, found in Pelobacter propionicus (strain DSM 2379 / NBRC 103807 / OttBd1).